Here is a 230-residue protein sequence, read N- to C-terminus: Complex I assembly factor TMEM126B, mitochondrial (230 aa).

Serine 34 is subject to Phosphoserine. 4 helical membrane passes run 72 to 92 (IYQM…SNFL), 110 to 130 (LATL…IDAL), 141 to 161 (VFRS…SLAF), and 199 to 219 (IPLV…YAVF).

It belongs to the TMEM126 family. As to quaternary structure, part of the mitochondrial complex I assembly/MCIA complex that comprises at least the core subunits TMEM126B, NDUFAF1, ECSIT and ACAD9 and complement subunits such as COA1 and TMEM186. Associates with the intermediate 370 kDa subcomplex of incompletely assembled complex I. Interacts with TMEM70.

The protein resides in the mitochondrion membrane. Its function is as follows. As part of the MCIA complex, involved in the assembly of the mitochondrial complex I. Participates in constructing the membrane arm of complex I. The chain is Complex I assembly factor TMEM126B, mitochondrial from Homo sapiens (Human).